We begin with the raw amino-acid sequence, 296 residues long: MHFQDIISTLNRFWSEQGCLLLQPYDTEKGAGTMSPHTVLRAIGPEPWAVAYPEPCRRPTDGRYGDNPNRAQHYFQYQVLIKPSPDGIQETYLASLEALGIKAADHDIRFVEDNWESPTLGAWGVGWEVWLDGMEVTQFTYFQQCGGLDCKPVSIEITYGLERLAMYLQDVESIWDLSWNAQRSYGDIWLPFEKGQCHFNFEASNPERLKQLFAIYEAEATDLIAQNLPAPALDFVLKCSHTFNLLEARGVISVTERTATIGRIRTLARKVAEAWLAEREALGFPLLEPSAATAAV.

The protein belongs to the class-II aminoacyl-tRNA synthetase family. In terms of assembly, tetramer of two alpha and two beta subunits.

The protein resides in the cytoplasm. The catalysed reaction is tRNA(Gly) + glycine + ATP = glycyl-tRNA(Gly) + AMP + diphosphate. The polypeptide is Glycine--tRNA ligase alpha subunit (Synechococcus sp. (strain WH7803)).